The chain runs to 173 residues: Photosystem I assembly protein Ycf3 (173 aa).

TPR repeat units lie at residues Ala35–Thr68, Gly72–Leu105, and Gly120–Asn153.

It belongs to the Ycf3 family.

It is found in the cellular thylakoid membrane. Its function is as follows. Essential for the assembly of the photosystem I (PSI) complex. May act as a chaperone-like factor to guide the assembly of the PSI subunits. This Nostoc sp. (strain PCC 7120 / SAG 25.82 / UTEX 2576) protein is Photosystem I assembly protein Ycf3.